A 151-amino-acid polypeptide reads, in one-letter code: Putative pre-16S rRNA nuclease (151 aa).

The protein belongs to the YqgF nuclease family.

The protein localises to the cytoplasm. Functionally, could be a nuclease involved in processing of the 5'-end of pre-16S rRNA. This is Putative pre-16S rRNA nuclease from Onion yellows phytoplasma (strain OY-M).